We begin with the raw amino-acid sequence, 269 residues long: Glutamate racemase (269 aa).

Substrate contacts are provided by residues 7-8 and 39-40; these read DS and YG. Residue cysteine 70 is the Proton donor/acceptor of the active site. A substrate-binding site is contributed by 71–72; it reads NT. The active-site Proton donor/acceptor is the cysteine 194. 195–196 is a substrate binding site; it reads TH.

The protein belongs to the aspartate/glutamate racemases family.

The enzyme catalyses L-glutamate = D-glutamate. It functions in the pathway cell wall biogenesis; peptidoglycan biosynthesis. In terms of biological role, provides the (R)-glutamate required for cell wall biosynthesis. This Ruegeria pomeroyi (strain ATCC 700808 / DSM 15171 / DSS-3) (Silicibacter pomeroyi) protein is Glutamate racemase.